The following is a 150-amino-acid chain: Transcription antitermination protein NusB (150 aa).

It belongs to the NusB family.

In terms of biological role, involved in transcription antitermination. Required for transcription of ribosomal RNA (rRNA) genes. Binds specifically to the boxA antiterminator sequence of the ribosomal RNA (rrn) operons. The sequence is that of Transcription antitermination protein NusB from Saccharophagus degradans (strain 2-40 / ATCC 43961 / DSM 17024).